Reading from the N-terminus, the 70-residue chain is Large ribosomal subunit protein bL31 (70 aa).

Zn(2+) is bound by residues Cys-16, Cys-18, Cys-37, and Cys-40.

This sequence belongs to the bacterial ribosomal protein bL31 family. Type A subfamily. Part of the 50S ribosomal subunit. Zn(2+) is required as a cofactor.

Binds the 23S rRNA. The polypeptide is Large ribosomal subunit protein bL31 (Psychromonas ingrahamii (strain DSM 17664 / CCUG 51855 / 37)).